The primary structure comprises 353 residues: MGCFFSKKAKRKRNSEEEQPQQDGEEPKQYSWDKREKVDPKDYMFTGLKDQTVGKLPDKVAGQQFVIQECENCNIYIFDHSATITIDDCTNCRIFLGPVKGSVFFRDCKDCKCVVACQQFRTRDCRRMDVFLCCSTQPIIESSTSMKFGCFQYYYPELALQFKEAGLSILNNTWSNIHDFTPVAGETNWSLLPPDAVIQDFIPLPDSDELKCVRVSADVHKSIIPVTWGQRLKKSDESCLVVFFAGDYTTANARKMIDEMVGKGLSLIQTKEVAMKIEDAKRVFQDNITDLICLLEKGPVVALEFNGEGAVDSCQTVINNTFSGTKVFVSESKESASRDVDNFYNFADMQMGM.

Positions 1–37 (MGCFFSKKAKRKRNSEEEQPQQDGEEPKQYSWDKREK) are disordered. A lipid anchor (N-myristoyl glycine) is attached at glycine 2. The S-palmitoyl cysteine moiety is linked to residue cysteine 3. The segment covering 25-37 (EEPKQYSWDKREK) has biased composition (basic and acidic residues). A C-CAP/cofactor C-like domain is found at 27-182 (PKQYSWDKRE…TWSNIHDFTP (156 aa)). GTP is bound by residues 101-102 (GS) and 118-121 (QQFR).

Belongs to the TBCC family. Post-translationally, myristoylated on Gly-2; which may be required for membrane targeting. In terms of processing, palmitoylated on Cys-3; which may be required for plasma membrane targeting.

Its subcellular location is the cell membrane. Its function is as follows. Acts as a GTPase-activating protein (GAP) for tubulin in concert with tubulin-specific chaperone C, but does not enhance tubulin heterodimerization. Acts as a GTPase-activating protein. May act as guanine nucleotide dissociation inhibitor towards ADP-ribosylation factor-like proteins. The polypeptide is Protein XRP2 (rp2) (Xenopus laevis (African clawed frog)).